Consider the following 220-residue polypeptide: UPF0502 protein PSPPH_2577 (220 aa).

Belongs to the UPF0502 family.

The chain is UPF0502 protein PSPPH_2577 from Pseudomonas savastanoi pv. phaseolicola (strain 1448A / Race 6) (Pseudomonas syringae pv. phaseolicola (strain 1448A / Race 6)).